Reading from the N-terminus, the 125-residue chain is Large ribosomal subunit protein bL12 (125 aa).

This sequence belongs to the bacterial ribosomal protein bL12 family. Homodimer. Part of the ribosomal stalk of the 50S ribosomal subunit. Forms a multimeric L10(L12)X complex, where L10 forms an elongated spine to which 2 to 4 L12 dimers bind in a sequential fashion. Binds GTP-bound translation factors.

In terms of biological role, forms part of the ribosomal stalk which helps the ribosome interact with GTP-bound translation factors. Is thus essential for accurate translation. In Azorhizobium caulinodans (strain ATCC 43989 / DSM 5975 / JCM 20966 / LMG 6465 / NBRC 14845 / NCIMB 13405 / ORS 571), this protein is Large ribosomal subunit protein bL12.